The sequence spans 385 residues: Type III polyketide synthase C (385 aa).

56–63 (KLQHLCKS) is a CoA binding site. Cysteine 165 acts as the Nucleophile in catalysis. 217–218 (GD) contacts substrate. Residues leucine 267, 307 to 310 (GGPA), and alanine 310 each bind CoA.

The protein belongs to the thiolase-like superfamily. Chalcone/stilbene synthases family. In terms of assembly, homodimer.

The protein resides in the endoplasmic reticulum. The protein operates within secondary metabolite biosynthesis; flavonoid biosynthesis. Functionally, plant type III polyketide synthases (PKSs) that catalyzes the condensation of malonyl-CoA units with various CoA ester starter molecules to generate a diverse array of natural products including long-chain alkyl alpha-pyrones. In Arabidopsis thaliana (Mouse-ear cress), this protein is Type III polyketide synthase C.